The chain runs to 279 residues: Tryptophan synthase alpha chain (279 aa).

Catalysis depends on proton acceptor residues glutamate 50 and aspartate 61.

The protein belongs to the TrpA family. Tetramer of two alpha and two beta chains.

It carries out the reaction (1S,2R)-1-C-(indol-3-yl)glycerol 3-phosphate + L-serine = D-glyceraldehyde 3-phosphate + L-tryptophan + H2O. Its pathway is amino-acid biosynthesis; L-tryptophan biosynthesis; L-tryptophan from chorismate: step 5/5. Its function is as follows. The alpha subunit is responsible for the aldol cleavage of indoleglycerol phosphate to indole and glyceraldehyde 3-phosphate. The protein is Tryptophan synthase alpha chain of Rhizobium johnstonii (strain DSM 114642 / LMG 32736 / 3841) (Rhizobium leguminosarum bv. viciae).